Reading from the N-terminus, the 236-residue chain is Cancer/testis antigen 55 (236 aa).

Positions 57 to 84 (RSSADVETGDNPLKAEPNLPAAVEEQSP) are disordered.

Interacts with GABARAP; this interaction may be important for GABARAP protein stability. Interacts with LAMP2; this interaction may be important for LAMP2 protein stability. As to expression, expressed in spermatozoa (at protein level).

The protein localises to the cytoplasm. It is found in the cytoplasmic vesicle. Its subcellular location is the secretory vesicle. The protein resides in the acrosome. It localises to the cell projection. The protein localises to the cilium. It is found in the flagellum. Functionally, plays a role in spermatogenesis, possibly acting in the regulation of the autophagy pathway. In Mus musculus (Mouse), this protein is Cancer/testis antigen 55 (Ct55).